We begin with the raw amino-acid sequence, 403 residues long: MVYQPASGARDLLPLDVEKKRWIEDRLQQVFHRWGYHRIITSTLERMDTLMAGEAIQRQMVIQLQNGEDDELGLRPELTASIARTVVTRMANATYPQRLYYNANVFRRTWESRHNRQQEFYQAGVELLGAGGLLANAEVLLLVADCLAALGLRQWHLILGEAGITRSLLSAFPANLQDKVRSAIAHLDRITIDTLPLSDKLRDRAQIIMDLRGPSADVLQKVSSLDLDEEQREAVNNLKSLVELLESEKKFPLILDLSLIQTIDYYTGIVFEVVNDTESQARVLGRGGRYDQLLGLYHPQRENIPGIGFGLSIEDLYQVLLSTQQLPQVTPASNYLVVPETGSANAAAFAYAQKLRDSTDLVRVEIDLGGRDAEAIRQYARDRSIAQIAWIKADSSPKIESLR.

It belongs to the class-II aminoacyl-tRNA synthetase family. HisZ subfamily. Heteromultimer composed of HisG and HisZ subunits.

It localises to the cytoplasm. It participates in amino-acid biosynthesis; L-histidine biosynthesis; L-histidine from 5-phospho-alpha-D-ribose 1-diphosphate: step 1/9. Functionally, required for the first step of histidine biosynthesis. May allow the feedback regulation of ATP phosphoribosyltransferase activity by histidine. The chain is ATP phosphoribosyltransferase regulatory subunit from Nostoc punctiforme (strain ATCC 29133 / PCC 73102).